The sequence spans 252 residues: Sulfoacetaldehyde reductase 2 (252 aa).

NADP(+) is bound at residue 6-30; it reads LITGATSGFGRAAARRFADAGWSLI. Ser139 contacts substrate. The Proton acceptor role is filled by Tyr152.

Belongs to the short-chain dehydrogenases/reductases (SDR) family. In terms of assembly, homodimer and heterotetramer.

It carries out the reaction 2-hydroxyethane-1-sulfonate + NADP(+) = sulfoacetaldehyde + NADPH + H(+). It participates in organosulfur degradation. Its function is as follows. Catalyzes the formation of isethionate from 2-sulfoacetaldehyde in the deaminative pathway of taurine. Constitutively expressed enzyme that only mediates a small part of the activity observed in taurine-grown cells. This Chromohalobacter salexigens (strain ATCC BAA-138 / DSM 3043 / CIP 106854 / NCIMB 13768 / 1H11) protein is Sulfoacetaldehyde reductase 2 (isfD2).